The sequence spans 140 residues: Large ribosomal subunit protein uL16 (140 aa).

Residues 1–16 (MLMPKRVKHRKQMKGR) show a composition bias toward basic residues. Residues 1-20 (MLMPKRVKHRKQMKGRMKGD) are disordered.

This sequence belongs to the universal ribosomal protein uL16 family. Part of the 50S ribosomal subunit.

In terms of biological role, binds 23S rRNA and is also seen to make contacts with the A and possibly P site tRNAs. This Geobacter sulfurreducens (strain ATCC 51573 / DSM 12127 / PCA) protein is Large ribosomal subunit protein uL16.